The primary structure comprises 392 residues: 23S rRNA (uracil(747)-C(5))-methyltransferase RlmC (392 aa).

Residues cysteine 4, cysteine 12, cysteine 15, and cysteine 93 each contribute to the [4Fe-4S] cluster site. S-adenosyl-L-methionine-binding residues include glutamine 218, phenylalanine 247, glutamate 275, and asparagine 321. Cysteine 348 (nucleophile) is an active-site residue.

This sequence belongs to the class I-like SAM-binding methyltransferase superfamily. RNA M5U methyltransferase family. RlmC subfamily.

It carries out the reaction uridine(747) in 23S rRNA + S-adenosyl-L-methionine = 5-methyluridine(747) in 23S rRNA + S-adenosyl-L-homocysteine + H(+). Catalyzes the formation of 5-methyl-uridine at position 747 (m5U747) in 23S rRNA. The protein is 23S rRNA (uracil(747)-C(5))-methyltransferase RlmC of Haemophilus influenzae (strain ATCC 51907 / DSM 11121 / KW20 / Rd).